A 132-amino-acid chain; its full sequence is NADH-quinone oxidoreductase subunit A (132 aa).

The next 3 membrane-spanning stretches (helical) occupy residues 14-34, 66-86, and 96-116; these read FFTF…ISWI, FYLV…LYAW, and IGFI…IYLI.

This sequence belongs to the complex I subunit 3 family. NDH-1 is composed of 13 different subunits. Subunits NuoA, H, J, K, L, M, N constitute the membrane sector of the complex.

Its subcellular location is the cell membrane. The catalysed reaction is a quinone + NADH + 5 H(+)(in) = a quinol + NAD(+) + 4 H(+)(out). In terms of biological role, NDH-1 shuttles electrons from NADH, via FMN and iron-sulfur (Fe-S) centers, to quinones in the respiratory chain. The immediate electron acceptor for the enzyme in this species is believed to be ubiquinone. Couples the redox reaction to proton translocation (for every two electrons transferred, four hydrogen ions are translocated across the cytoplasmic membrane), and thus conserves the redox energy in a proton gradient. The protein is NADH-quinone oxidoreductase subunit A of Buchnera aphidicola subsp. Baizongia pistaciae (strain Bp).